Consider the following 329-residue polypeptide: Beta-ketoacyl-[acyl-carrier-protein] synthase III (329 aa).

Residues Cys113 and His255 contribute to the active site. Residues Gln256 to Arg260 form an ACP-binding region. Asn285 is a catalytic residue.

It belongs to the thiolase-like superfamily. FabH family. In terms of assembly, homodimer.

The protein resides in the cytoplasm. The enzyme catalyses malonyl-[ACP] + acetyl-CoA + H(+) = 3-oxobutanoyl-[ACP] + CO2 + CoA. The protein operates within lipid metabolism; fatty acid biosynthesis. Functionally, catalyzes the condensation reaction of fatty acid synthesis by the addition to an acyl acceptor of two carbons from malonyl-ACP. Catalyzes the first condensation reaction which initiates fatty acid synthesis and may therefore play a role in governing the total rate of fatty acid production. Possesses both acetoacetyl-ACP synthase and acetyl transacylase activities. Its substrate specificity determines the biosynthesis of branched-chain and/or straight-chain of fatty acids. The polypeptide is Beta-ketoacyl-[acyl-carrier-protein] synthase III (Chlorobium phaeovibrioides (strain DSM 265 / 1930) (Prosthecochloris vibrioformis (strain DSM 265))).